The primary structure comprises 733 residues: Catalase-peroxidase (733 aa).

The N-terminal stretch at 1-23 is a signal peptide; that stretch reads MNNESKCPFAAAHGVRSPATARA. The tryptophyl-tyrosyl-methioninium (Trp-Tyr) (with M-250) cross-link spans 96 to 224; the sequence is WHSAGTYRTA…LAAVQMGLIY (129 aa). The active-site Proton acceptor is the histidine 97. Residues 224 to 250 constitute a cross-link (tryptophyl-tyrosyl-methioninium (Tyr-Met) (with W-96)); the sequence is YVNPEGPDGNPDPVASGRDVRETFARM. Histidine 265 contributes to the heme b binding site.

Belongs to the peroxidase family. Peroxidase/catalase subfamily. As to quaternary structure, homodimer or homotetramer. Heme b is required as a cofactor. Formation of the three residue Trp-Tyr-Met cross-link is important for the catalase, but not the peroxidase activity of the enzyme.

It carries out the reaction H2O2 + AH2 = A + 2 H2O. The enzyme catalyses 2 H2O2 = O2 + 2 H2O. Its function is as follows. Bifunctional enzyme with both catalase and broad-spectrum peroxidase activity. The chain is Catalase-peroxidase from Azoarcus sp. (strain BH72).